The chain runs to 330 residues: Aspartate--ammonia ligase (330 aa).

It belongs to the class-II aminoacyl-tRNA synthetase family. AsnA subfamily.

Its subcellular location is the cytoplasm. It catalyses the reaction L-aspartate + NH4(+) + ATP = L-asparagine + AMP + diphosphate + H(+). The protein operates within amino-acid biosynthesis; L-asparagine biosynthesis; L-asparagine from L-aspartate (ammonia route): step 1/1. This chain is Aspartate--ammonia ligase, found in Actinobacillus pleuropneumoniae serotype 7 (strain AP76).